The sequence spans 408 residues: Na(+)/H(+) antiporter NhaA (408 aa).

The next 12 membrane-spanning stretches (helical) occupy residues 42–62, 69–89, 110–130, 140–160, 169–189, 192–212, 215–235, 238–258, 277–297, 312–332, 346–366, and 380–400; these read LMFVAALALLLANSPFAPVYF, VLGLTVLHWINDALMAVFFLL, ALPGIAALGGMVVPAVIFIAV, GWAIPSATDIAFALGVLSLLG, IFLTALAILDDLGAVLIIALF, AELTPLMLILAAATLLGLAAL, FGVKPLAPYLVLGVVLWFFVL, GIHATLAGVALALAIPLQAST, VAFLIVPVFGFANAGVSFAGL, LGLFFGKQVGVFGFAWLAIWL, LYGVAVLCGIGFTMSLFIGLL, and IGVLLGSTLAGLIGWLILRVT.

It belongs to the NhaA Na(+)/H(+) (TC 2.A.33) antiporter family.

The protein localises to the cell inner membrane. The enzyme catalyses Na(+)(in) + 2 H(+)(out) = Na(+)(out) + 2 H(+)(in). In terms of biological role, na(+)/H(+) antiporter that extrudes sodium in exchange for external protons. The protein is Na(+)/H(+) antiporter NhaA of Nitrobacter hamburgensis (strain DSM 10229 / NCIMB 13809 / X14).